The sequence spans 244 residues: 15,16-dihydrobiliverdin:ferredoxin oxidoreductase (244 aa).

The protein belongs to the HY2 family.

The catalysed reaction is 15,16-dihydrobiliverdin + oxidized 2[4Fe-4S]-[ferredoxin] = biliverdin IXalpha + reduced 2[4Fe-4S]-[ferredoxin] + 2 H(+). Catalyzes the two-electron reduction of biliverdin IX-alpha at the C15 methine bridge. The protein is 15,16-dihydrobiliverdin:ferredoxin oxidoreductase (pebA) of Gloeobacter violaceus (strain ATCC 29082 / PCC 7421).